The following is a 64-amino-acid chain: uncharacterized protein (64 aa).

Residues Val-15–Val-37 form a helical membrane-spanning segment.

The protein belongs to the HHV-5 US34A protein family.

The protein resides in the host membrane. This is an uncharacterized protein from Homo sapiens (Human).